Reading from the N-terminus, the 141-residue chain is Large ribosomal subunit protein uL11 (141 aa).

This sequence belongs to the universal ribosomal protein uL11 family. Part of the ribosomal stalk of the 50S ribosomal subunit. Interacts with L10 and the large rRNA to form the base of the stalk. L10 forms an elongated spine to which L12 dimers bind in a sequential fashion forming a multimeric L10(L12)X complex. Post-translationally, one or more lysine residues are methylated.

Forms part of the ribosomal stalk which helps the ribosome interact with GTP-bound translation factors. The protein is Large ribosomal subunit protein uL11 of Streptococcus pneumoniae serotype 2 (strain D39 / NCTC 7466).